A 193-amino-acid polypeptide reads, in one-letter code: Small ribosomal subunit protein uS7 (193 aa).

It belongs to the universal ribosomal protein uS7 family. As to quaternary structure, part of the 30S ribosomal subunit.

In terms of biological role, one of the primary rRNA binding proteins, it binds directly to 16S rRNA where it nucleates assembly of the head domain of the 30S subunit. Is located at the subunit interface close to the decoding center. This Saccharolobus solfataricus (strain ATCC 35092 / DSM 1617 / JCM 11322 / P2) (Sulfolobus solfataricus) protein is Small ribosomal subunit protein uS7.